Consider the following 382-residue polypeptide: MQQRQSILWGAVATLMWAGLAHAGEASPVDPLRPVVDASIQPLLKEHRIPGMAVAVLKDGKAHYFNYGVANRESGAGVSEQTLFEIGSVSKTLTATLGAYAVVKGAMQLDDKASRHAPWLKGSAFDSITMGELATYSAGGLPLQFPEEVDSSEKMRAYYRQWAPVYSPGSHRQYSNPSIGLFGHLAASSLKQPFAPLMEQTLLPGLGMHHTYVNVPKQAMASYAYGYSKEDKPIRVNPGMLADEAYGIKTSSADLLRFVKANIGGVDDKALQQAISLTHQGHYSVGGMTQGLGWESYAYPVTEQTLLAGNSAKVILEANPTAAPRESGSQVLFNKTGSTNGFGAYVAFVPARGIGIVMLANRNYPIEARIKAAHAILAQLAG.

A signal peptide spans 1-23 (MQQRQSILWGAVATLMWAGLAHA). S88 functions as the Acyl-ester intermediate in the catalytic mechanism. Position 88 (S88) interacts with AMP. Residues S88, Q144, Y174, T336, S338, and N363 each coordinate GMP. The IMP site is built by S88, Q144, Y174, T336, S338, and N363. Y174 serves as a coordination point for AMP. AMP is bound at residue S338.

Belongs to the class-C beta-lactamase family. In terms of assembly, monomer.

The catalysed reaction is a beta-lactam + H2O = a substituted beta-amino acid. Inhibited by various nucleotides in vitro, including adenosine 5'-(P-acetyl)monophosphate (acAMP), inosine-5'-monophosphate (IMP) and guanosine-5'-monophosphate (GMP); IMP and GMP exhibit strongest competitive inhibition. Inhibited by the beta-lactamase-blocking agent, avibactam. Inhibited by clavulanic acid. Weakly inhibited by citric acid. Class C beta-lactamase which confers resistance to penicillins and cephalosporins. Has benzylpenicillin-, ceftazidime-, nitrocefin- and imipenem-hydrolyzing activity. The sequence is that of Beta-lactamase CMY-10 from Klebsiella aerogenes (Enterobacter aerogenes).